A 104-amino-acid polypeptide reads, in one-letter code: uncharacterized protein (104 aa).

It belongs to the mimivirus L28/L54 family.

This is an uncharacterized protein from Acanthamoeba polyphaga mimivirus (APMV).